Consider the following 337-residue polypeptide: Monoacylglycerol lipase abhd6-B (337 aa).

Over 1 to 19 (MDIDVLNMFLVAGGTLLVP) the chain is Extracellular. Residues 20 to 42 (LLAFMTSFLLWPAALIRIYYWYW) form a helical; Signal-anchor for type II membrane protein membrane-spanning segment. At 43-337 (RRALGMQVKY…QSTDNHKKHD (295 aa)) the chain is on the cytoplasmic side. The AB hydrolase-1 domain maps to 72-313 (PSVLMLHGFS…CGHSVVMERP (242 aa)). The active-site Nucleophile is Ser-148. Catalysis depends on charge relay system residues Asp-278 and His-306.

This sequence belongs to the AB hydrolase superfamily.

It is found in the late endosome membrane. It localises to the lysosome membrane. The protein localises to the mitochondrion membrane. The enzyme catalyses Hydrolyzes glycerol monoesters of long-chain fatty acids.. It carries out the reaction 1-octanoylglycerol + H2O = octanoate + glycerol + H(+). It catalyses the reaction 1-decanoylglycerol + H2O = decanoate + glycerol + H(+). The catalysed reaction is 1-dodecanoylglycerol + H2O = dodecanoate + glycerol + H(+). The enzyme catalyses 1-tetradecanoylglycerol + H2O = tetradecanoate + glycerol + H(+). It carries out the reaction 2-hexadecanoylglycerol + H2O = glycerol + hexadecanoate + H(+). It catalyses the reaction 2-(9Z-octadecenoyl)-glycerol + H2O = glycerol + (9Z)-octadecenoate + H(+). The catalysed reaction is 1-(9Z-octadecenoyl)-glycerol + H2O = glycerol + (9Z)-octadecenoate + H(+). The enzyme catalyses 2-(9Z,12Z-octadecadienoyl)-glycerol + H2O = (9Z,12Z)-octadecadienoate + glycerol + H(+). It carries out the reaction 2-(5Z,8Z,11Z,14Z-eicosatetraenoyl)-glycerol + H2O = glycerol + (5Z,8Z,11Z,14Z)-eicosatetraenoate + H(+). It catalyses the reaction 1-(5Z,8Z,11Z,14Z-eicosatetraenoyl)-glycerol + H2O = glycerol + (5Z,8Z,11Z,14Z)-eicosatetraenoate + H(+). The catalysed reaction is 1-(9Z,12Z-octadecadienoyl)-glycerol + H2O = (9Z,12Z)-octadecadienoate + glycerol + H(+). The enzyme catalyses 3-(9Z-octadecenoyl)-sn-glycero-1-phospho-(3'-(9Z-octadecenoyl)-1'-sn-glycerol) + H2O = 3-(9Z-octadecenoyl)-sn-glycero-1-phospho-(1'-sn-glycerol) + (9Z)-octadecenoate + H(+). It carries out the reaction (S,S)-2-(9Z-octadecenoyl)-sn-glycero-1-phospho-(2'-(9Z-octadecenoyl)-1'-sn-glycerol) + H2O = (S,S)-2-(9Z-octadecenoyl)-sn-glycero-1-phospho-(1'-sn-glycerol) + (9Z)-octadecenoate + H(+). It catalyses the reaction (R,R)-2-(9Z-octadecenoyl)-sn-glycero-3-phospho-(2'-(9Z-octadecenoyl)-3'-sn-glycerol) + H2O = (R,R)-2-(9Z-octadecenoyl)-sn-glycero-3-phospho-(3'-sn-glycerol) + (9Z)-octadecenoate + H(+). In terms of biological role, lipase that preferentially hydrolysis medium-chain saturated monoacylglycerols including 2-arachidonoylglycerol. Through 2-arachidonoylglycerol degradation may regulate endocannabinoid signaling pathways. Also has a lysophosphatidyl lipase activity with a preference for lysophosphatidylglycerol among other lysophospholipids. Also able to degrade bis(monoacylglycero)phosphate (BMP) and constitutes the major enzyme for BMP catabolism. BMP, also known as lysobisphosphatidic acid, is enriched in late endosomes and lysosomes and plays a key role in the formation of intraluminal vesicles and in lipid sorting. This is Monoacylglycerol lipase abhd6-B (abhd6-b) from Xenopus laevis (African clawed frog).